A 317-amino-acid polypeptide reads, in one-letter code: Protein-methionine-sulfoxide reductase catalytic subunit MsrP (317 aa).

The tat-type signal signal peptide spans 1 to 40 (MKKLTSNDVTPEEIFYQRRKIIKAFGLSAVATALPTFSFA). Mo-molybdopterin contacts are provided by residues Asn-71, 74 to 75 (YE), Cys-129, Thr-164, Asn-216, Arg-221, and 232 to 234 (SIK).

It belongs to the MsrP family. Heterodimer of a catalytic subunit (MsrP) and a heme-binding subunit (MsrQ). It depends on Mo-molybdopterin as a cofactor. In terms of processing, predicted to be exported by the Tat system. The position of the signal peptide cleavage has not been experimentally proven.

The protein resides in the periplasm. The catalysed reaction is L-methionyl-[protein] + a quinone + H2O = L-methionyl-(S)-S-oxide-[protein] + a quinol. It carries out the reaction L-methionyl-[protein] + a quinone + H2O = L-methionyl-(R)-S-oxide-[protein] + a quinol. In terms of biological role, part of the MsrPQ system that repairs oxidized periplasmic proteins containing methionine sulfoxide residues (Met-O), using respiratory chain electrons. Thus protects these proteins from oxidative-stress damage caused by reactive species of oxygen and chlorine generated by the host defense mechanisms. MsrPQ is essential for the maintenance of envelope integrity under bleach stress, rescuing a wide series of structurally unrelated periplasmic proteins from methionine oxidation. The catalytic subunit MsrP is non-stereospecific, being able to reduce both (R-) and (S-) diastereoisomers of methionine sulfoxide. The chain is Protein-methionine-sulfoxide reductase catalytic subunit MsrP from Histophilus somni (strain 2336) (Haemophilus somnus).